The chain runs to 49 residues: Small, acid-soluble spore protein O (49 aa).

The disordered stretch occupies residues 23-49 (AGYNEKFSNEPLTEAQRQNNKKRKKNQ).

It belongs to the SspO family.

The protein resides in the spore core. The polypeptide is Small, acid-soluble spore protein O (Geobacillus thermodenitrificans (strain NG80-2)).